A 601-amino-acid polypeptide reads, in one-letter code: Protein nubbin (601 aa).

Residues 1 to 25 (MVMSELRWHTASPEDNKNSLKRDLL) are compositionally biased toward basic and acidic residues. 5 disordered regions span residues 1–32 (MVMS…PTSA), 49–94 (SRSP…AKRQ), 121–158 (KQEE…ATAS), 351–425 (PASS…ETTD), and 581–601 (INPS…YMMH). Over residues 49-68 (SRSPSPLQSNASDCDDNNSS) the composition is skewed to low complexity. The segment covering 135–157 (NLTSDNSRHSTQSPSNSVKSATA) has biased composition (polar residues). Positions 384-415 (TPSTPTSGTQMSQGTTTPQPKTVASAAAARAA) are enriched in low complexity. A POU-specific domain is found at 421-495 (EETTDLEELE…LLQKWLDDAD (75 aa)). Residues 523–582 (RRKKRTSIETTIRGALEKAFLANQKPTSEEITQLADRLSMEKEVVRVWFCNRRQKEKRIN) constitute a DNA-binding region (homeobox). A compositionally biased stretch (acidic residues) spans 591–601 (ADDDESSYMMH).

The protein belongs to the POU transcription factor family. Class-2 subfamily. In terms of tissue distribution, initial expression in cellular blastoderm stage, then in ectodermal stripes during germband extension. Broad expression in the neuroectoderm followed by limitation to discrete subsets of CNS cells, and expression in specific PNS neurons and support cells.

It localises to the nucleus. In terms of biological role, DNA-binding regulatory protein implicated in early development. Involved in neuronal cell fate decision. Repressed directly or indirectly by the BX-C homeotic proteins. In Drosophila melanogaster (Fruit fly), this protein is Protein nubbin (nub).